We begin with the raw amino-acid sequence, 175 residues long: ATP-dependent protease subunit HslV (175 aa).

The active site involves Thr-2. Na(+) is bound by residues Gly-158, Cys-161, and Thr-164.

Belongs to the peptidase T1B family. HslV subfamily. As to quaternary structure, a double ring-shaped homohexamer of HslV is capped on each side by a ring-shaped HslU homohexamer. The assembly of the HslU/HslV complex is dependent on binding of ATP.

It localises to the cytoplasm. The enzyme catalyses ATP-dependent cleavage of peptide bonds with broad specificity.. Its activity is regulated as follows. Allosterically activated by HslU binding. Its function is as follows. Protease subunit of a proteasome-like degradation complex believed to be a general protein degrading machinery. In Haemophilus influenzae (strain ATCC 51907 / DSM 11121 / KW20 / Rd), this protein is ATP-dependent protease subunit HslV.